Consider the following 217-residue polypeptide: 3,4-dihydroxy-2-butanone 4-phosphate synthase (217 aa).

Residues arginine 37–glutamate 38, aspartate 42, arginine 150–threonine 154, and glutamate 174 contribute to the D-ribulose 5-phosphate site. Residue glutamate 38 participates in Mg(2+) binding. Mg(2+) is bound at residue histidine 153.

The protein belongs to the DHBP synthase family. In terms of assembly, homodimer. Mg(2+) serves as cofactor. Mn(2+) is required as a cofactor.

The enzyme catalyses D-ribulose 5-phosphate = (2S)-2-hydroxy-3-oxobutyl phosphate + formate + H(+). It functions in the pathway cofactor biosynthesis; riboflavin biosynthesis; 2-hydroxy-3-oxobutyl phosphate from D-ribulose 5-phosphate: step 1/1. Functionally, catalyzes the conversion of D-ribulose 5-phosphate to formate and 3,4-dihydroxy-2-butanone 4-phosphate. In Yersinia pseudotuberculosis serotype O:1b (strain IP 31758), this protein is 3,4-dihydroxy-2-butanone 4-phosphate synthase.